The chain runs to 302 residues: uncharacterized protein (302 aa).

Helical transmembrane passes span 13–32 (GILLAISAYTMWGIAPIYFK), 42–64 (ILSHRVVWSFVLLAVLIHLGRRW), 77–96 (FWLLLVTALLVGGNWLIFIW), 106–125 (ASLGYYINPLLNVLLGMLFL), 132–150 (LQWFAVALAAIGVGIQLVV), 154–171 (VPIVAIALATSFGFYGLL), 183–202 (LFLETLFMLPAAAIYLIWLA), 217–239 (NLLLVCAGVVTTLPLLCFTGAAA), 246–265 (LGFFQYIGPSLMFLLAVLVY), and 275–297 (ITFAFIWSALVIFSVDGLKAGHA). The EamA domain occupies 22–149 (TMWGIAPIYF…AAIGVGIQLV (128 aa)).

The protein belongs to the EamA transporter family.

It localises to the cell membrane. This is an uncharacterized protein from Vibrio cholerae serotype O1 (strain ATCC 39315 / El Tor Inaba N16961).